The sequence spans 385 residues: Effector protein hopAB3 (385 aa).

Disordered regions lie at residues 1 to 61, 73 to 139, and 215 to 293; these read MVGI…AGRP, TREW…SPLY, and ADSQ…PRIN. The segment at 1 to 333 is host recognition; that stretch reads MVGISGRAGP…INMEDLRAAL (333 aa). A compositionally biased stretch (low complexity) spans 217–234; that stretch reads SQQAARAPARTPPRSSVR. Composition is skewed to polar residues over residues 245-256 and 265-283; these read ATESSSGSNQRS and MTSN…TSQR.

This sequence belongs to the HopAB family. Interacts physically with plant cell Pto.

The protein localises to the secreted. Effector protein involved in gene-for-gene resistance in tomato plants. It is recognized by the host Pto resistance protein and elicits Pto and Prf-dependent hypersensitive response (HR) and programmed cell death (PCD), resulting in host immunity. In susceptible plants, promotes virulence, in part, by enhancing the development of disease symptoms and bacterial growth. The polypeptide is Effector protein hopAB3 (hopAB3) (Pseudomonas syringae pv. maculicola).